Here is a 343-residue protein sequence, read N- to C-terminus: S-adenosylmethionine:tRNA ribosyltransferase-isomerase (343 aa).

The protein belongs to the QueA family. As to quaternary structure, monomer.

It localises to the cytoplasm. The catalysed reaction is 7-aminomethyl-7-carbaguanosine(34) in tRNA + S-adenosyl-L-methionine = epoxyqueuosine(34) in tRNA + adenine + L-methionine + 2 H(+). It participates in tRNA modification; tRNA-queuosine biosynthesis. In terms of biological role, transfers and isomerizes the ribose moiety from AdoMet to the 7-aminomethyl group of 7-deazaguanine (preQ1-tRNA) to give epoxyqueuosine (oQ-tRNA). The polypeptide is S-adenosylmethionine:tRNA ribosyltransferase-isomerase (Coxiella burnetii (strain RSA 331 / Henzerling II)).